The sequence spans 385 residues: Glucans biosynthesis protein C (385 aa).

Helical transmembrane passes span 17 to 39 (AWLM…TWHV), 54 to 76 (FIHS…MLFL), 88 to 110 (VERV…FIML), 136 to 158 (LISH…WIFK), 179 to 198 (LSVI…RTIF), 213 to 235 (IVMQ…IFPH), 242 to 261 (TPSR…YLLN), 276 to 295 (SVIT…SFGH), 308 to 330 (FVNA…GAYI), and 334 to 356 (ITSN…IILY).

The protein belongs to the acyltransferase 3 family. OpgC subfamily.

The protein resides in the cell membrane. It participates in glycan metabolism; osmoregulated periplasmic glucan (OPG) biosynthesis. Its function is as follows. Necessary for the succinyl substitution of periplasmic glucans. Could catalyze the transfer of succinyl residues from the cytoplasmic side of the membrane to the nascent glucan backbones on the periplasmic side of the membrane. The sequence is that of Glucans biosynthesis protein C from Escherichia coli O157:H7.